We begin with the raw amino-acid sequence, 202 residues long: Glycerol-3-phosphate acyltransferase (202 aa).

The next 6 helical transmembrane spans lie at 2–22 (MIIV…GFVI), 54–74 (FLVT…PLWL), 85–105 (FFTN…YPVY), 120–140 (VVLG…FIVL), 141–161 (KIFK…VIGS), and 162–182 (LIIQ…ILII).

The protein belongs to the PlsY family. In terms of assembly, probably interacts with PlsX.

Its subcellular location is the cell membrane. It carries out the reaction an acyl phosphate + sn-glycerol 3-phosphate = a 1-acyl-sn-glycero-3-phosphate + phosphate. Its pathway is lipid metabolism; phospholipid metabolism. Functionally, catalyzes the transfer of an acyl group from acyl-phosphate (acyl-PO(4)) to glycerol-3-phosphate (G3P) to form lysophosphatidic acid (LPA). This enzyme utilizes acyl-phosphate as fatty acyl donor, but not acyl-CoA or acyl-ACP. The polypeptide is Glycerol-3-phosphate acyltransferase (Staphylococcus aureus (strain USA300)).